A 108-amino-acid polypeptide reads, in one-letter code: Thiosulfate sulfurtransferase GlpE (108 aa).

The Rhodanese domain maps to 17–105 (VSQSAILVDV…WLREFPQAIT (89 aa)). The active-site Cysteine persulfide intermediate is C65.

Belongs to the GlpE family.

Its subcellular location is the cytoplasm. It catalyses the reaction thiosulfate + hydrogen cyanide = thiocyanate + sulfite + 2 H(+). It carries out the reaction thiosulfate + [thioredoxin]-dithiol = [thioredoxin]-disulfide + hydrogen sulfide + sulfite + 2 H(+). Functionally, transferase that catalyzes the transfer of sulfur from thiosulfate to thiophilic acceptors such as cyanide or dithiols. May function in a CysM-independent thiosulfate assimilation pathway by catalyzing the conversion of thiosulfate to sulfite, which can then be used for L-cysteine biosynthesis. This chain is Thiosulfate sulfurtransferase GlpE, found in Proteus mirabilis (strain HI4320).